The sequence spans 185 residues: UPF0669 protein C6orf120 homolog (185 aa).

Positions 1–23 (MAARWRRILIVFVAAQVLCLVNT) are cleaved as a signal peptide. An N-linked (GlcNAc...) asparagine glycan is attached at N47.

It belongs to the UPF0669 family.

It localises to the secreted. This is UPF0669 protein C6orf120 homolog from Gallus gallus (Chicken).